We begin with the raw amino-acid sequence, 275 residues long: Ribosomal protein L11 methyltransferase (275 aa).

S-adenosyl-L-methionine is bound by residues Thr130, Gly151, Asp172, and Asn213.

Belongs to the methyltransferase superfamily. PrmA family.

The protein localises to the cytoplasm. The catalysed reaction is L-lysyl-[protein] + 3 S-adenosyl-L-methionine = N(6),N(6),N(6)-trimethyl-L-lysyl-[protein] + 3 S-adenosyl-L-homocysteine + 3 H(+). Functionally, methylates ribosomal protein L11. The sequence is that of Ribosomal protein L11 methyltransferase from Wolinella succinogenes (strain ATCC 29543 / DSM 1740 / CCUG 13145 / JCM 31913 / LMG 7466 / NCTC 11488 / FDC 602W) (Vibrio succinogenes).